The chain runs to 372 residues: Glutamate 5-kinase (372 aa).

ATP is bound at residue Lys14. Substrate is bound by residues Ser54, Asp141, and Asn153. 173 to 174 contacts ATP; sequence TD. The PUA domain occupies 280 to 358; the sequence is RGHVVIDAGA…GEIEAVLGYM (79 aa).

This sequence belongs to the glutamate 5-kinase family.

It is found in the cytoplasm. The enzyme catalyses L-glutamate + ATP = L-glutamyl 5-phosphate + ADP. The protein operates within amino-acid biosynthesis; L-proline biosynthesis; L-glutamate 5-semialdehyde from L-glutamate: step 1/2. Functionally, catalyzes the transfer of a phosphate group to glutamate to form L-glutamate 5-phosphate. The protein is Glutamate 5-kinase of Burkholderia thailandensis (strain ATCC 700388 / DSM 13276 / CCUG 48851 / CIP 106301 / E264).